Consider the following 126-residue polypeptide: Small ribosomal subunit protein uS13 (126 aa).

Residues 92 to 126 (HRRGLPVRGQRTKTNARTRKGPKKTVAGKKKATRK) are disordered.

It belongs to the universal ribosomal protein uS13 family. As to quaternary structure, part of the 30S ribosomal subunit. Forms a loose heterodimer with protein S19. Forms two bridges to the 50S subunit in the 70S ribosome.

In terms of biological role, located at the top of the head of the 30S subunit, it contacts several helices of the 16S rRNA. In the 70S ribosome it contacts the 23S rRNA (bridge B1a) and protein L5 of the 50S subunit (bridge B1b), connecting the 2 subunits; these bridges are implicated in subunit movement. Contacts the tRNAs in the A and P-sites. The polypeptide is Small ribosomal subunit protein uS13 (Deinococcus radiodurans (strain ATCC 13939 / DSM 20539 / JCM 16871 / CCUG 27074 / LMG 4051 / NBRC 15346 / NCIMB 9279 / VKM B-1422 / R1)).